We begin with the raw amino-acid sequence, 471 residues long: 6-phosphofructo-2-kinase/fructose-2,6-bisphosphatase 1 (471 aa).

Position 2 is an N-acetylserine (Ser-2). A 6-phosphofructo-2-kinase region spans residues 2–250; sequence SPEMGELTQT…VYYLMNIHVT (249 aa). The residue at position 33 (Ser-33) is a Phosphoserine; by PKA. 49-57 provides a ligand contact to ATP; that stretch reads GLPARGKTY. The beta-D-fructose 6-phosphate site is built by Arg-82 and Arg-105. Residue Asp-131 is part of the active site. Residues Thr-133 and Arg-139 each coordinate beta-D-fructose 6-phosphate. Ser-141 is modified (phosphoserine). Cys-161 is a catalytic residue. An ATP-binding site is contributed by 170–175; sequence NIRQVK. Residues Lys-175, Arg-196, and Tyr-200 each coordinate beta-D-fructose 6-phosphate. The interval 251-471 is fructose-2,6-bisphosphatase; the sequence is PRSIYLCRHG…EALDTVPAHY (221 aa). Arg-258 lines the beta-D-fructose 2,6-bisphosphate pocket. His-259 acts as the Tele-phosphohistidine intermediate in catalysis. Asn-265, Gly-271, and Arg-308 together coordinate beta-D-fructose 2,6-bisphosphate. Glu-328 functions as the Proton donor/acceptor in the catalytic mechanism. Beta-D-fructose 2,6-bisphosphate is bound by residues Tyr-339, Arg-353, Lys-357, Tyr-368, Gln-394, and Arg-398. 350–353 contributes to the ATP binding site; the sequence is FALR. Residues 394-398 and Tyr-430 each bind ATP; that span reads QAVMR.

In the C-terminal section; belongs to the phosphoglycerate mutase family. As to quaternary structure, homodimer. Liver.

The enzyme catalyses beta-D-fructose 2,6-bisphosphate + H2O = beta-D-fructose 6-phosphate + phosphate. It carries out the reaction beta-D-fructose 6-phosphate + ATP = beta-D-fructose 2,6-bisphosphate + ADP + H(+). Phosphorylation at Ser-33 inhibits the kinase and activates the bisphosphatase. Synthesis and degradation of fructose 2,6-bisphosphate. This Homo sapiens (Human) protein is 6-phosphofructo-2-kinase/fructose-2,6-bisphosphatase 1.